Consider the following 360-residue polypeptide: Putative F-box protein At3g47150 (360 aa).

One can recognise an F-box domain in the interval 6–56 (NTTQIYIPLDLQINILLRLPVKSLLRFRCVSKLWCSIITSHDFRNRHFNIT).

The chain is Putative F-box protein At3g47150 from Arabidopsis thaliana (Mouse-ear cress).